The sequence spans 496 residues: RNA-binding motif protein, Y chromosome, family 1 member D (496 aa).

Positions glycine 8 to lysine 85 constitute an RRM domain. Disordered regions lie at residues aspartate 67–tyrosine 349 and lysine 452–tyrosine 496. Low complexity-rich tracts occupy residues proline 97 to glycine 114 and proline 149 to glycine 159. Over residues asparagine 175–methionine 184 the composition is skewed to polar residues. 6 stretches are compositionally biased toward basic and acidic residues: residues arginine 204–glycine 214, aspartate 242–serine 253, alanine 276–tyrosine 289, glycine 313–tyrosine 326, serine 335–tyrosine 349, and glycine 484–tyrosine 496.

As to quaternary structure, interacts with splicing factor proteins SFRS3/SRP20, TRA2B/SFRS10, KHDRBS1/SAM68 and KHDRBS3. As to expression, testis-specific.

Its subcellular location is the nucleus. In terms of biological role, RNA-binding protein which may be involved in spermatogenesis. Required for sperm development, possibly by participating in pre-mRNA splicing in the testis. The polypeptide is RNA-binding motif protein, Y chromosome, family 1 member D (RBMY1D) (Homo sapiens (Human)).